We begin with the raw amino-acid sequence, 173 residues long: Superoxide dismutase [Cu-Zn] 2 (173 aa).

An N-terminal signal peptide occupies residues Met1–Ala19. His67, His69, and His92 together coordinate Cu cation. Cysteines 74 and 169 form a disulfide. Zn(2+) contacts are provided by His92, His101, His109, and Asp112. Cu cation is bound at residue His147.

Belongs to the Cu-Zn superoxide dismutase family. As to quaternary structure, monomer. Cu cation serves as cofactor. The cofactor is Zn(2+).

The protein localises to the periplasm. The enzyme catalyses 2 superoxide + 2 H(+) = H2O2 + O2. Functionally, destroys radicals which are normally produced within the cells and which are toxic to biological systems. The chain is Superoxide dismutase [Cu-Zn] 2 (sodC) from Salmonella typhimurium (strain LT2 / SGSC1412 / ATCC 700720).